Consider the following 361-residue polypeptide: Aromatic amino acid aminotransferase (361 aa).

Position 215 is an N6-(pyridoxal phosphate)lysine (Lys-215).

This sequence belongs to the class-II pyridoxal-phosphate-dependent aminotransferase family. Homodimer. Pyridoxal 5'-phosphate is required as a cofactor.

The enzyme catalyses an aromatic L-alpha-amino acid + 2-oxoglutarate = an aromatic oxo-acid + L-glutamate. In terms of biological role, aminotransferase that catalyzes the conversion of aromatic amino acids and 2-oxoglutarate into corresponding aromatic oxo acids and L-glutamate. In Mycolicibacterium smegmatis (strain ATCC 700084 / mc(2)155) (Mycobacterium smegmatis), this protein is Aromatic amino acid aminotransferase.